A 294-amino-acid chain; its full sequence is MPSDPEEDYIPWIQQLCELFGHDYFVQVSQDFIEDDFNLTGLSSQVPYYREALYTILDYQVETAEDHNTDNTTTNTSNNNDSRNGTSKRNASELPNKALLAHSAELLYGLIHARYIVSKQGLTAMASKFERNDFGSCPRYFCDGMHLIPVGSTDVPGQETVRLFCPCCNDIYIPSSSRYLNIDGAFFGTTFPGLLVKMFPEIENQCRIRITKFSQNDFGLKLFGFKINELSATGPRMKWLRMHPETEGEKQELTHVNIMFQLATYMKTKRMEEDDEEEEDEVEEEDDDRTMASE.

2 disordered regions span residues 66–90 (DHNT…SKRN) and 269–294 (KRME…MASE). Residues 70-87 (DNTTTNTSNNNDSRNGTS) are compositionally biased toward low complexity. The segment covering 273–288 (EDDEEEEDEVEEEDDD) has biased composition (acidic residues).

Belongs to the casein kinase 2 subunit beta family. In terms of assembly, tetramer composed of two alpha chains, one beta chain and one beta' chain. In terms of processing, phosphorylated by alpha subunit.

Regulatory subunit of casein kinase II/CK2. As part of the kinase complex regulates the basal catalytic activity of the alpha subunit a constitutively active serine/threonine-protein kinase that phosphorylates a large number of substrates containing acidic residues C-terminal to the phosphorylated serine or threonine. The sequence is that of Casein kinase II subunit beta (CKB1) from Candida albicans (Yeast).